Here is a 400-residue protein sequence, read N- to C-terminus: F-box/LRR-repeat protein 14 (400 aa).

An F-box domain is found at 2-48; the sequence is ETHISCLFPELLAMIFGYLDVRDKGRAAQVCTAWRDAAYHKSVWRGV. Positions 2–48 are required for down-regulation of SNAI1; it reads ETHISCLFPELLAMIFGYLDVRDKGRAAQVCTAWRDAAYHKSVWRGV. LRR repeat units lie at residues 144–163, 170–191, 203–225, 229–250, and 254–275; these read GLEVLELGGCSNITNTGLLL, RLKSLNLRSCRHLSDVGIGHLA, GLEQLTLQDCQKLTDLSLKHISR, GLRLLNLSFCGGISDAGLLHLS, and SLRSLNLRSCDNISDTGIMHLA.

In terms of assembly, part of a SCF (SKP1-cullin-F-box) ubiquitin-protein ligase complex. Interacts with SKP1 and CUL1. Interacts with SNAI1; the interaction requires the phosphorylation of the two serine residues in the substrate destruction motif D-S-G-X(2,3,4)-S.

Its subcellular location is the cytoplasm. Substrate-recognition component of some SCF (SKP1-CUL1-F-box protein)-type E3 ubiquitin-protein ligase complexes. The SCF(FBXL14) complex acts by mediating ubiquitination and subsequent degradation of SNAI1. The sequence is that of F-box/LRR-repeat protein 14 (FBXL14) from Bos taurus (Bovine).